The sequence spans 124 residues: UPF0344 protein BH2983 (124 aa).

The next 4 helical transmembrane spans lie at 15 to 35 (GSWAILIILFLVSYFLIKAGK), 40 to 60 (KILHMIVRLFFVIMLITGAGM), 61 to 81 (LVYWQFAFLFIVKGVLAIVLI), and 102 to 122 (IYWIVFITCLVLVALIGYNVI).

It belongs to the UPF0344 family.

The protein localises to the cell membrane. In Halalkalibacterium halodurans (strain ATCC BAA-125 / DSM 18197 / FERM 7344 / JCM 9153 / C-125) (Bacillus halodurans), this protein is UPF0344 protein BH2983.